Reading from the N-terminus, the 326-residue chain is Light-induced protein, chloroplastic (326 aa).

Residues 1–63 constitute a chloroplast transit peptide; sequence MASISSLNQI…TNPKPKFTAQ (63 aa).

This sequence belongs to the LIPC family. In terms of assembly, associates with the major light-harvesting antenna complex polypeptides of the PSII oxygen-evolving complex. Expressed at high levels in leaves and in the petals and anthers of flowers.

It is found in the plastid. Its subcellular location is the chloroplast thylakoid membrane. Functionally, required for normal plant growth. May be both photoprotective and play an ancillary role in photosynthesis. May structurally stabilize thylakoids during osmotic and oxidative stress. In Solanum demissum (Wild potato), this protein is Light-induced protein, chloroplastic.